Reading from the N-terminus, the 185-residue chain is MASEARESPANNPGLSTNRDEATKGYIMQQTMFRIKDPKASLDFYSRVLGMSLLKRLDFSEMKFSLYFLGYEDTTTAPTDPTERTVWTFGQPATIELTHNWGTESDPEFKGYHNGNSEPRGFGHIGVTVDDVHKACERFEELGVEFAKKPNDGKMKNIAFIKDPDGYWIEIFDLKTIGTTTVNAA.

The disordered stretch occupies residues 1 to 22; the sequence is MASEARESPANNPGLSTNRDEA. The VOC domain maps to 27 to 174; sequence IMQQTMFRIK…DGYWIEIFDL (148 aa). Residues Gln30 and Arg34 each coordinate substrate. Gln30 provides a ligand contact to Zn(2+). Position 96 (Glu96) interacts with Zn(2+). Residues Asn100, Arg120, His124, and 154–155 each bind substrate; that span reads KM. A Zn(2+)-binding site is contributed by His124. Position 170 (Glu170) interacts with Zn(2+). The active-site Proton donor/acceptor is Glu170.

It belongs to the glyoxalase I family. It depends on Zn(2+) as a cofactor.

It carries out the reaction (R)-S-lactoylglutathione = methylglyoxal + glutathione. It participates in secondary metabolite metabolism; methylglyoxal degradation; (R)-lactate from methylglyoxal: step 1/2. Catalyzes the conversion of hemimercaptal, formed from methylglyoxal and glutathione, to S-lactoylglutathione. The polypeptide is Lactoylglutathione lyase (Arabidopsis thaliana (Mouse-ear cress)).